Reading from the N-terminus, the 176-residue chain is Cytochrome c oxidase subunit 5b-1, mitochondrial (176 aa).

Residues methionine 1–phenylalanine 55 constitute a mitochondrion transit peptide. 3 residues coordinate Zn(2+): cysteine 122, cysteine 146, and cysteine 149. Residues valine 157–histidine 176 are disordered.

This sequence belongs to the cytochrome c oxidase subunit 5B (TC 3.D.4.11) family.

It localises to the mitochondrion inner membrane. In terms of biological role, this protein is one of the nuclear-coded polypeptide chains of cytochrome c oxidase, the terminal oxidase in mitochondrial electron transport. This Arabidopsis thaliana (Mouse-ear cress) protein is Cytochrome c oxidase subunit 5b-1, mitochondrial (COX5B-1).